We begin with the raw amino-acid sequence, 555 residues long: Phosphoglucomutase (555 aa).

Substrate contacts are provided by residues threonine 45, arginine 49, 148–149, and lysine 158; that span reads SH. Serine 148 acts as the Phosphoserine intermediate in catalysis. Serine 148 serves as a coordination point for Mg(2+). Mg(2+) is bound by residues aspartate 306, aspartate 308, and aspartate 310. Substrate-binding positions include 310–311 and 393–395; these read DR and EES.

Belongs to the phosphohexose mutase family. The cofactor is Mg(2+).

It carries out the reaction alpha-D-glucose 1-phosphate = alpha-D-glucose 6-phosphate. Functionally, this enzyme participates in both the breakdown and synthesis of glucose. This Komagataeibacter xylinus (Gluconacetobacter xylinus) protein is Phosphoglucomutase (celB).